We begin with the raw amino-acid sequence, 560 residues long: Cilia- and flagella-associated protein 184 (560 aa).

Residues 1-12 (MEGGSEHTKDPG) show a composition bias toward basic and acidic residues. The segment at 1–209 (MEGGSEHTKD…QEEGKPLGGR (209 aa)) is disordered. Composition is skewed to acidic residues over residues 41–61 (GELESEPEEEEEEEEEEEEEA) and 101–110 (EPEEPAEAGA). Composition is skewed to basic and acidic residues over residues 127–144 (AEARAEELEQAAEGKEVR) and 179–209 (ETRRDGAESEGRAGEGRPAKSQEEGKPLGGR). Coiled-coil stretches lie at residues 357–481 (QAAL…QGRD) and 510–536 (DSLLRDLEEKVDKTQLLHQRLESLKRH).

Belongs to the CFAP184 family. In terms of assembly, forms a complex with CFAP263; the interaction is required for functional activity in cilia.

It localises to the cell projection. The protein localises to the cilium. The protein resides in the cytoplasm. Its subcellular location is the cytoskeleton. It is found in the microtubule organizing center. It localises to the centrosome. In terms of biological role, in complex with CFAP263, acts as a regulator of ciliary beating that connects radial spoke 3 (RS3) to the inner dynein arm (IDA) and the nexin-dynein regulatory complex (N-DRC). The complex is positioned parallel to N-DRC and forms a connection between the arch at the base of RS3, the IDA tail and N-DRC. This Macaca fascicularis (Crab-eating macaque) protein is Cilia- and flagella-associated protein 184 (CFAP184).